The following is a 164-amino-acid chain: Protein-export protein SecB (164 aa).

The protein belongs to the SecB family. As to quaternary structure, homotetramer, a dimer of dimers. One homotetramer interacts with 1 SecA dimer.

Its subcellular location is the cytoplasm. One of the proteins required for the normal export of preproteins out of the cell cytoplasm. It is a molecular chaperone that binds to a subset of precursor proteins, maintaining them in a translocation-competent state. It also specifically binds to its receptor SecA. This is Protein-export protein SecB from Rhodopseudomonas palustris (strain BisB18).